The sequence spans 271 residues: MSQPQLTQEALAREAALPENLWIQCPYCKQGSYRESLGNAQVCPHCHYGFRITAKKRLSLIATATEEWDADLVTSDPLDFPGYTEKLAAGQAATGLKDSVWTGQATIGGQSCALGIMDPKFMMGSLGTVTGERLTRLFEKATSANLAVVLFCASGGARMQEGIHSLMQMAKVSAAVKAHSNAGLLFISVLTDPTMGGVTASFAMQGDITLAEPHSLIGFAGRRVIEQTINQKLPQNFQRAETLLQSGFIDAVVQRQDQPSYLGDLLALHTA.

The CoA carboxyltransferase N-terminal domain maps to 21–271; the sequence is LWIQCPYCKQ…LGDLLALHTA (251 aa). Zn(2+)-binding residues include cysteine 25, cysteine 28, cysteine 43, and cysteine 46. The segment at 25 to 46 adopts a C4-type zinc-finger fold; that stretch reads CPYCKQGSYRESLGNAQVCPHC.

This sequence belongs to the AccD/PCCB family. As to quaternary structure, acetyl-CoA carboxylase is a heterohexamer composed of biotin carboxyl carrier protein (AccB), biotin carboxylase (AccC) and two subunits each of ACCase subunit alpha (AccA) and ACCase subunit beta (AccD). Zn(2+) serves as cofactor.

It localises to the cytoplasm. It carries out the reaction N(6)-carboxybiotinyl-L-lysyl-[protein] + acetyl-CoA = N(6)-biotinyl-L-lysyl-[protein] + malonyl-CoA. It functions in the pathway lipid metabolism; malonyl-CoA biosynthesis; malonyl-CoA from acetyl-CoA: step 1/1. Functionally, component of the acetyl coenzyme A carboxylase (ACC) complex. Biotin carboxylase (BC) catalyzes the carboxylation of biotin on its carrier protein (BCCP) and then the CO(2) group is transferred by the transcarboxylase to acetyl-CoA to form malonyl-CoA. The sequence is that of Acetyl-coenzyme A carboxylase carboxyl transferase subunit beta from Lacticaseibacillus paracasei (strain ATCC 334 / BCRC 17002 / CCUG 31169 / CIP 107868 / KCTC 3260 / NRRL B-441) (Lactobacillus paracasei).